The sequence spans 145 residues: Putative pre-16S rRNA nuclease (145 aa).

Belongs to the YqgF nuclease family.

The protein localises to the cytoplasm. Functionally, could be a nuclease involved in processing of the 5'-end of pre-16S rRNA. The polypeptide is Putative pre-16S rRNA nuclease (Levilactobacillus brevis (strain ATCC 367 / BCRC 12310 / CIP 105137 / JCM 1170 / LMG 11437 / NCIMB 947 / NCTC 947) (Lactobacillus brevis)).